A 282-amino-acid chain; its full sequence is Transmembrane protein 41B (282 aa).

The interval 1 to 36 (MAKKRAGNRETESSPLVEQEPRPSKETPVPKGAQSP) is disordered. A run of 6 helical transmembrane segments spans residues 43-63 (MSIL…YLVF), 102-122 (TQVL…AIPG), 138-160 (LALF…LSYL), 188-208 (LINY…FINI), 216-236 (PLGV…FVAI), and 251-271 (AVSW…ILPV). Positions 131-242 (GYLYPFPLAL…FVAINAGTTL (112 aa)) are VTT domain; required for its function in autophagy.

The protein belongs to the TMEM41 family.

The protein resides in the endoplasmic reticulum membrane. Its subcellular location is the endomembrane system. The enzyme catalyses a 1,2-diacyl-sn-glycero-3-phospho-L-serine(in) = a 1,2-diacyl-sn-glycero-3-phospho-L-serine(out). It catalyses the reaction cholesterol(in) = cholesterol(out). It carries out the reaction a 1,2-diacyl-sn-glycero-3-phosphocholine(in) = a 1,2-diacyl-sn-glycero-3-phosphocholine(out). The catalysed reaction is a 1,2-diacyl-sn-glycero-3-phosphoethanolamine(in) = a 1,2-diacyl-sn-glycero-3-phosphoethanolamine(out). Functionally, phospholipid scramblase involved in lipid homeostasis and membrane dynamics processes. Has phospholipid scramblase activity toward cholesterol and phosphatidylserine, as well as phosphatidylethanolamine and phosphatidylcholine. Required for autophagosome formation: participates in early stages of autophagosome biogenesis at the endoplasmic reticulum (ER) membrane by reequilibrating the leaflets of the ER as lipids are extracted by atg2 (atg2a or atg2b) to mediate autophagosome assembly. In addition to autophagy, involved in other processes in which phospholipid scramblase activity is required. Required for normal motor neuron development. The polypeptide is Transmembrane protein 41B (Danio rerio (Zebrafish)).